A 66-amino-acid chain; its full sequence is Large ribosomal subunit protein bL33c (66 aa).

The protein belongs to the bacterial ribosomal protein bL33 family.

It localises to the plastid. The protein resides in the chloroplast. The polypeptide is Large ribosomal subunit protein bL33c (Ceratophyllum demersum (Rigid hornwort)).